Consider the following 399-residue polypeptide: MGRADKVVLAYSGGVDTSVCIPYLKNEWGVKEVITLAADLGQGDELGPIQAKALRCGAVESLVTNAQEEFVTEYAFRAIKANALYENRYPLSTALARPLIAKLLVEAAEKYGADAVAHGCTAKGNDQVRFDLGILALNPNLKVLAPAREWNMSREETIAYGERCGVESPVKKSSPFSIDRNLLGRSIEAGPLEDPMTEPPEEIYLMTKAIADTPDTPEYVDIGFEKGIPVSLNGQTLDPVSLISQLNEKVGNHGVGRLDMIENRVVGIKSREIYEAPALLVLIDAHRDLESLTLTADVTQYKHGVGDTYSQLIYRGLWYSPLKTALDALIDQTQERVTGMVRVKLFKGNAVIVGRQSENSIYSANLSTYGSDDAFDHKAAEGFIYIWGLPTRVWAQKTK.

ATP contacts are provided by residues Ala10–Ser18 and Ala38. Position 89 (Tyr89) interacts with L-citrulline. Position 119 (Gly119) interacts with ATP. Positions 121, 125, and 126 each coordinate L-aspartate. Residue Asn125 participates in L-citrulline binding. L-citrulline contacts are provided by Arg129, Ser177, Ser186, Glu262, and Tyr274.

It belongs to the argininosuccinate synthase family. Type 1 subfamily. As to quaternary structure, homotetramer.

It is found in the cytoplasm. It carries out the reaction L-citrulline + L-aspartate + ATP = 2-(N(omega)-L-arginino)succinate + AMP + diphosphate + H(+). It participates in amino-acid biosynthesis; L-arginine biosynthesis; L-arginine from L-ornithine and carbamoyl phosphate: step 2/3. The polypeptide is Argininosuccinate synthase (Rippkaea orientalis (strain PCC 8801 / RF-1) (Cyanothece sp. (strain PCC 8801))).